Reading from the N-terminus, the 42-residue chain is Crotamine-IV-3 (42 aa).

3 cysteine pairs are disulfide-bonded: C4–C37, C11–C31, and C19–C38.

It belongs to the crotamine-myotoxin family. Monomer. Expressed by the venom gland.

It localises to the secreted. In terms of biological role, cationic peptide that possesses multiple functions. It acts as a cell-penetrating peptide (CPP), and as a potent voltage-gated potassium channel (Kv) inhibitor. It exhibits antimicrobial activities, and hind limb paralysis. It also induces potent blockade of neuromuscular transmission in young chicken biventer cervicis preparation and potent myotoxic effect. In mice, it induces myonecrosis, upon intramuscular or subcutaneous injections. In Crotalus durissus cumanensis (South American rattlesnake), this protein is Crotamine-IV-3.